The primary structure comprises 88 residues: Small ribosomal subunit protein bS20 (88 aa).

A disordered region spans residues 1–27 (MANTASAKKMTRKIAKRTAINRSRRSR).

This sequence belongs to the bacterial ribosomal protein bS20 family.

Functionally, binds directly to 16S ribosomal RNA. This Methylobacterium radiotolerans (strain ATCC 27329 / DSM 1819 / JCM 2831 / NBRC 15690 / NCIMB 10815 / 0-1) protein is Small ribosomal subunit protein bS20.